The following is a 376-amino-acid chain: uncharacterized protein (376 aa).

Positions 1–22 (MVATGRIIITLLAAALDEIILA) are cleaved as a signal peptide.

The protein belongs to the ascovirus HvAV ORF17 family.

This is an uncharacterized protein from Heliothis virescens ascovirus 3e (HvAV-3e).